We begin with the raw amino-acid sequence, 585 residues long: ATP-dependent lipid A-core flippase (585 aa).

A run of 6 helical transmembrane segments spans residues 23-43 (LAFG…AYVI), 64-84 (IAAY…FMGT), 140-160 (AFLT…WMFY), 163-183 (WQLS…VSVV), 247-267 (ILSV…VLYI), and 273-293 (FITD…TMLL). The region spanning 27–308 (VAIIGMVGYS…LTTVNSEFQK (282 aa)) is the ABC transmembrane type-1 domain. Positions 340–576 (LEFRDVTFHY…DGAYAQLHKL (237 aa)) constitute an ABC transporter domain. Position 374–381 (374–381 (GRSGSGKS)) interacts with ATP.

This sequence belongs to the ABC transporter superfamily. Lipid exporter (TC 3.A.1.106) family. Homodimer.

The protein resides in the cell inner membrane. It catalyses the reaction ATP + H2O + lipid A-core oligosaccharideSide 1 = ADP + phosphate + lipid A-core oligosaccharideSide 2.. In terms of biological role, involved in lipopolysaccharide (LPS) biosynthesis. Translocates lipid A-core from the inner to the outer leaflet of the inner membrane. Transmembrane domains (TMD) form a pore in the inner membrane and the ATP-binding domain (NBD) is responsible for energy generation. This Pseudoalteromonas atlantica (strain T6c / ATCC BAA-1087) protein is ATP-dependent lipid A-core flippase.